Consider the following 353-residue polypeptide: uncharacterized protein (353 aa).

An N-terminal signal peptide occupies residues Met1–Ala30.

This is an uncharacterized protein from Escherichia coli O157:H7.